Here is a 159-residue protein sequence, read N- to C-terminus: Phosphopantetheine adenylyltransferase (159 aa).

Thr-9 contacts substrate. Residues 9 to 10 (TF) and His-17 each bind ATP. Residues Lys-41, Leu-73, and Arg-87 each coordinate substrate. Residues 88-90 (GLR), Glu-98, and 123-129 (YSFISST) each bind ATP.

The protein belongs to the bacterial CoaD family. Homohexamer. It depends on Mg(2+) as a cofactor.

The protein localises to the cytoplasm. It carries out the reaction (R)-4'-phosphopantetheine + ATP + H(+) = 3'-dephospho-CoA + diphosphate. Its pathway is cofactor biosynthesis; coenzyme A biosynthesis; CoA from (R)-pantothenate: step 4/5. Functionally, reversibly transfers an adenylyl group from ATP to 4'-phosphopantetheine, yielding dephospho-CoA (dPCoA) and pyrophosphate. This chain is Phosphopantetheine adenylyltransferase, found in Pseudomonas syringae pv. syringae (strain B728a).